The following is a 125-amino-acid chain: MDELRLIGRCIAVKMVSPRPRTSLTRGDFRGVSWDKREWKAIIKRRGSRFVRAELIPRSRDDNGQCISILFSDDTSGITMSAGVCKFLLVFDPTVEIFLDIPRDAQLNDSITFEELDPPVTISPY.

This Hordeum vulgare (Barley) protein is Protein 5 (5).